A 207-amino-acid polypeptide reads, in one-letter code: Guanylate kinase (207 aa).

The 180-residue stretch at 5 to 184 (GNLFIVSAPS…ALADLRAIIR (180 aa)) folds into the Guanylate kinase-like domain. 12-19 (APSGAGKS) provides a ligand contact to ATP.

The protein belongs to the guanylate kinase family.

Its subcellular location is the cytoplasm. The catalysed reaction is GMP + ATP = GDP + ADP. Functionally, essential for recycling GMP and indirectly, cGMP. The polypeptide is Guanylate kinase (Shewanella oneidensis (strain ATCC 700550 / JCM 31522 / CIP 106686 / LMG 19005 / NCIMB 14063 / MR-1)).